A 197-amino-acid polypeptide reads, in one-letter code: Phosphoheptose isomerase (197 aa).

The region spanning 37–197 (MLQCLMNDGK…CIDSVLLEGM (161 aa)) is the SIS domain. A substrate-binding site is contributed by 52-54 (NGG). Residues H61 and E65 each coordinate Zn(2+). Substrate contacts are provided by residues E65, 94–95 (ND), 120–122 (STS), S125, and Q175. Zn(2+) contacts are provided by Q175 and H183.

Belongs to the SIS family. GmhA subfamily. In terms of assembly, homotetramer. The cofactor is Zn(2+).

The protein localises to the cytoplasm. It carries out the reaction 2 D-sedoheptulose 7-phosphate = D-glycero-alpha-D-manno-heptose 7-phosphate + D-glycero-beta-D-manno-heptose 7-phosphate. It functions in the pathway carbohydrate biosynthesis; D-glycero-D-manno-heptose 7-phosphate biosynthesis; D-glycero-alpha-D-manno-heptose 7-phosphate and D-glycero-beta-D-manno-heptose 7-phosphate from sedoheptulose 7-phosphate: step 1/1. Its function is as follows. Catalyzes the isomerization of sedoheptulose 7-phosphate in D-glycero-D-manno-heptose 7-phosphate. The chain is Phosphoheptose isomerase from Neisseria meningitidis serogroup C (strain 053442).